Reading from the N-terminus, the 856-residue chain is Facilitated trehalose transporter Tret1 (856 aa).

Disordered stretches follow at residues 1–29 (MSGR…LKEK) and 62–202 (DPFL…KATS). At 1–389 (MSGRDNRGAG…LEVYRPTTNP (389 aa)) the chain is on the cytoplasmic side. Residues 69–80 (VSPQRHPQTVRT) are compositionally biased toward polar residues. Positions 133–142 (EIREHRDRQQ) are enriched in basic and acidic residues. A compositionally biased stretch (polar residues) spans 170 to 180 (GNSNTNSNKAA). Residues Ser-247, Ser-248, Ser-249, Ser-319, and Ser-321 each carry the phosphoserine modification. The disordered stretch occupies residues 326-345 (LTSRQHFQQQRSISTDSRKS). The segment covering 329–340 (RQHFQQQRSIST) has biased composition (polar residues). Residues 390–410 (IFIWTQVIAALSVSLGSLVVG) form a helical membrane-spanning segment. The Extracellular segment spans residues 411–439 (FVSAYTSPALVSMSDPNITSFTVTKDAGS). An N-linked (GlcNAc...) asparagine glycan is attached at Asn-427. A helical membrane pass occupies residues 440 to 460 (WVGGIMPLAGLVGGVAGGPLI). Topologically, residues 461–472 (EYMGRRNTILAT) are cytoplasmic. A helical transmembrane segment spans residues 473-493 (AVPFIVSSLLIACAVNVAMVL). Topologically, residues 494–496 (CGR) are extracellular. Residues 497–517 (FLAGFCVGIASLSLPVYLGET) traverse the membrane as a helical segment. The Cytoplasmic portion of the chain corresponds to 518-527 (VQPEVRGTLG). Residues 528-548 (LLPTAFGNIGILVCFVAGSFM) form a helical membrane-spanning segment. N-linked (GlcNAc...) asparagine glycosylation occurs at Asn-549. Over 549–551 (NWS) the chain is Extracellular. A helical membrane pass occupies residues 552–572 (MLAFLGAALPVPFLILMFLIP). Over 573 to 635 (ETPRWYVSRG…ELLKRNNLKP (63 aa)) the chain is Cytoplasmic. A helical transmembrane segment spans residues 636 to 656 (LSISLGLMFFQQFSGINAVIF). Topologically, residues 657 to 672 (YTVQIFKDAGSTIDGN) are extracellular. The helical transmembrane segment at 673-693 (VCTIIVGVVNFVATFIGILLI) threads the bilayer. Topologically, residues 694–699 (DRAGRK) are cytoplasmic. The helical transmembrane segment at 700 to 720 (ILLYASDIAMVLTLFVLGGFF) threads the bilayer. Residues 721–739 (YCKAHGPDVSHLGWLPLTC) are Extracellular-facing. A helical transmembrane segment spans residues 740–760 (FVVYILGFSVGFGPIPWLMMG). The Cytoplasmic portion of the chain corresponds to 761–766 (EILPAK). Residues 767 to 787 (IRGAAASVATSFNWTCTFVVT) form a helical membrane-spanning segment. Residues 788–800 (KTFQDLVGSLGAH) are Extracellular-facing. A helical transmembrane segment spans residues 801–821 (GAFWLFGAICFVGLFFVILYV). At 822 to 856 (PETQGKTLEDIERKMMGRVRRMSSVANIKPLSFNM) the chain is on the cytoplasmic side. Phosphoserine occurs at positions 844 and 845.

The protein belongs to the major facilitator superfamily. Sugar transporter (TC 2.A.1.1) family. Trehalose transporter subfamily.

It localises to the cell membrane. In terms of biological role, low-capacity facilitative transporter for trehalose. Does not transport maltose, sucrose or lactose. Mediates the bidirectional transfer of trehalose. Responsible for the transport of trehalose synthesized in the fat body and the incorporation of trehalose into other tissues that require a carbon source, thereby regulating trehalose levels in the hemolymph. The protein is Facilitated trehalose transporter Tret1 of Drosophila yakuba (Fruit fly).